We begin with the raw amino-acid sequence, 846 residues long: Disks large-associated protein 5 (846 aa).

Position 67 is a phosphoserine; by CDK1 (serine 67). The stretch at 90–120 (RKQMLQKYKEEKQLQKLKEQREKAKRGIFKV) forms a coiled coil. Residues 153–284 (TRSKAKDQME…TNATSGMNPD (132 aa)) are disordered. Basic and acidic residues-rich tracts occupy residues 156–174 (KAKD…DVRA) and 182–194 (TSEK…EKKV). The residue at position 202 (serine 202) is a Phosphoserine. The span at 203–225 (LRMTRSATQAAKQVPRTVSSTTA) shows a compositional bias: polar residues. Positions 250–266 (KNVETKPDKGISCKVDS) are enriched in basic and acidic residues. Positions 269 to 281 (NTLNSQTNATSGM) are enriched in polar residues. Threonine 326 is subject to Phosphothreonine. Threonine 329 is subject to Phosphothreonine; by CDK1. Threonine 338 is subject to Phosphothreonine. Lysine 347 participates in a covalent cross-link: Glycyl lysine isopeptide (Lys-Gly) (interchain with G-Cter in SUMO2). Phosphothreonine; by CDK1 is present on residues threonine 401 and threonine 402. Serine 618 carries the post-translational modification Phosphoserine; by CDK1. Serine 627 is subject to Phosphoserine; by AURKA. Polar residues predominate over residues 628 to 671 (VSSEGPSQRLGTPKSVNKAVSQSRNEMGIPQQTTSPENAGPQNT). The segment at 628–674 (VSSEGPSQRLGTPKSVNKAVSQSRNEMGIPQQTTSPENAGPQNTKSE) is disordered. 2 positions are modified to phosphoserine: serine 629 and serine 634. At threonine 639 the chain carries Phosphothreonine; by CDK1. Residue serine 642 is modified to Phosphoserine; by CDK1. Serine 662 carries the post-translational modification Phosphoserine. A phosphoserine; by AURKA mark is found at serine 725 and serine 757. Phosphothreonine; by CDK1 is present on threonine 759. Serine 774 and serine 777 each carry phosphoserine. Position 784 is a phosphothreonine (threonine 784). A phosphoserine mark is found at serine 806 and serine 812. Serine 830 carries the phosphoserine; by AURKA modification. Serine 839 is modified (phosphoserine; by CDK1).

It belongs to the SAPAP family. In terms of assembly, interacts with CDK1. Interacts with the C-terminal proline-rich region of FBXO7. Recruited by FBXO7 to a SCF (SKP1-CUL1-F-box) protein complex in a CDK1/Cyclin B-phosphorylation dependent manner. Interacts with CDH1. Post-translationally, ubiquitinated, leading to its degradation. In terms of processing, decreased phosphorylation levels are associated with the differentiation of intestinal epithelial cells. In terms of tissue distribution, abundantly expressed in fetal liver. Expressed at lower levels in bone marrow, testis, colon, and placenta.

Its subcellular location is the nucleus. It is found in the cytoplasm. It localises to the cytoskeleton. The protein resides in the spindle. In terms of biological role, potential cell cycle regulator that may play a role in carcinogenesis of cancer cells. Mitotic phosphoprotein regulated by the ubiquitin-proteasome pathway. Key regulator of adherens junction integrity and differentiation that may be involved in CDH1-mediated adhesion and signaling in epithelial cells. The protein is Disks large-associated protein 5 (DLGAP5) of Homo sapiens (Human).